The following is a 259-amino-acid chain: Ubiquitin-conjugating enzyme E2 J2 (259 aa).

At 1 to 226 the chain is on the cytoplasmic side; that stretch reads MSNNSNKRAP…AGLPQANRHH (226 aa). The 151-residue stretch at 12 to 162 folds into the UBC core domain; sequence TATQRLKQDY…DKVFCELFPE (151 aa). The Glycyl thioester intermediate role is filled by Cys94. The helical; Anchor for type IV membrane protein transmembrane segment at 227–247 threads the bilayer; that stretch reads GLLGGALANLFVIVGFAAFAY. Over 248 to 259 the chain is Lumenal; it reads TVKYVLRSIAQE.

The protein belongs to the ubiquitin-conjugating enzyme family. In terms of assembly, interacts with murid herpesvirus 4 protein K3 (mK3).

It localises to the endoplasmic reticulum membrane. It catalyses the reaction S-ubiquitinyl-[E1 ubiquitin-activating enzyme]-L-cysteine + [E2 ubiquitin-conjugating enzyme]-L-cysteine = [E1 ubiquitin-activating enzyme]-L-cysteine + S-ubiquitinyl-[E2 ubiquitin-conjugating enzyme]-L-cysteine.. It functions in the pathway protein modification; protein ubiquitination. Its function is as follows. Catalyzes the covalent attachment of ubiquitin to other proteins. Seems to function in the selective degradation of misfolded membrane proteins from the endoplasmic reticulum (ERAD). In cooperation with the GATOR2 complex, catalyzes 'Lys-6'-linked ubiquitination of NPRL2. In case of infection by the murid herpesvirus 4, its association with the viral E3 ligase K3 mediates ubiquitination of host surface class I (MHC-I) H-2D(b)/H2-D1 and H-2K(b)/H2-K1 molecules before they exit the endoplasmic reticulum, leading to their degradation by the ERAD system, thus blocking the immune detection of virus-infected cells. The complex formed with the murid herpesvirus 4 protein K3 mediates ubiquitination of lysine, as well as serine and threonine residues present in the cytoplasmic tail of surface class I molecules and promotes ubiquitination of hydroxylated serine or threonine residues via ester bonds instead of the classical isopeptide linkage. In Mus musculus (Mouse), this protein is Ubiquitin-conjugating enzyme E2 J2 (Ube2j2).